A 63-amino-acid chain; its full sequence is MVEREKKRQKLVLKGKLSDTRLHNRCWRCGRPRGYIRDFGLCRICFREMAHQGLLPGVVKASW.

Zn(2+)-binding residues include C26, C29, C42, and C45.

The protein belongs to the universal ribosomal protein uS14 family. Zinc-binding uS14 subfamily. In terms of assembly, part of the 30S ribosomal subunit. Contacts proteins S3 and S10. Zn(2+) serves as cofactor.

In terms of biological role, binds 16S rRNA, required for the assembly of 30S particles and may also be responsible for determining the conformation of the 16S rRNA at the A site. The protein is Small ribosomal subunit protein uS14 of Gloeobacter violaceus (strain ATCC 29082 / PCC 7421).